The chain runs to 192 residues: Elongation factor P (192 aa).

K37 carries the post-translational modification N6-(3,6-diaminohexanoyl)-5-hydroxylysine.

Belongs to the elongation factor P family. Post-translationally, may be beta-lysylated on the epsilon-amino group of Lys-37 by the combined action of EpmA and EpmB, and then hydroxylated on the C5 position of the same residue by EpmC (if this protein is present). Lysylation is critical for the stimulatory effect of EF-P on peptide-bond formation. The lysylation moiety may extend toward the peptidyltransferase center and stabilize the terminal 3-CCA end of the tRNA. Hydroxylation of the C5 position on Lys-37 may allow additional potential stabilizing hydrogen-bond interactions with the P-tRNA.

It is found in the cytoplasm. Its pathway is protein biosynthesis; polypeptide chain elongation. Involved in peptide bond synthesis. Alleviates ribosome stalling that occurs when 3 or more consecutive Pro residues or the sequence PPG is present in a protein, possibly by augmenting the peptidyl transferase activity of the ribosome. Modification of Lys-37 is required for alleviation. This Acinetobacter baylyi (strain ATCC 33305 / BD413 / ADP1) protein is Elongation factor P.